We begin with the raw amino-acid sequence, 585 residues long: Poly(A) RNA polymerase, mitochondrial (585 aa).

The transit peptide at 1 to 37 (MAARGVGLLTRLPVCSQRRNRIPRSISRLLSCPGTIA) directs the protein to the mitochondrion. At K90 the chain carries N6-acetyllysine. ATP is bound by residues 107-109 (YES) and 244-245 (GC). 2 residues coordinate Mg(2+): D246 and D248. In terms of domain architecture, PAP-associated spans 441–486 (ELLIKEFFEYFGNFAFNKNSINIRQGREQNKPDSSPLYIQNPFETS). The segment at 537–585 (PGSGHTSLSRKKKKKPMSEKVKGLLASIKSNSPDSSTDTSGKRTISTQA) is disordered. Positions 564-585 (IKSNSPDSSTDTSGKRTISTQA) are enriched in polar residues.

It belongs to the DNA polymerase type-B-like family. In terms of assembly, homodimer. The cofactor is Mg(2+). Requires Mn(2+) as cofactor.

It is found in the cytoplasm. It localises to the mitochondrion. It catalyses the reaction RNA(n) + ATP = RNA(n)-3'-adenine ribonucleotide + diphosphate. Polymerase that creates the 3' poly(A) tail of mitochondrial transcripts. Can use all four nucleotides, but has higher activity with ATP and UTP (in vitro). Plays a role in replication-dependent histone mRNA degradation. May be involved in the terminal uridylation of mature histone mRNAs before their degradation is initiated. Might be responsible for the creation of some UAA stop codons which are not encoded in mtDNA. The protein is Poly(A) RNA polymerase, mitochondrial (Mtpap) of Mus musculus (Mouse).